A 419-amino-acid chain; its full sequence is UDP-N-acetylglucosamine 1-carboxyvinyltransferase (419 aa).

Phosphoenolpyruvate is bound at residue Lys22 to Asn23. Residue Arg93 coordinates UDP-N-acetyl-alpha-D-glucosamine. The active-site Proton donor is Cys117. Position 117 is a 2-(S-cysteinyl)pyruvic acid O-phosphothioketal (Cys117). Residues Asp307 and Ile329 each contribute to the UDP-N-acetyl-alpha-D-glucosamine site.

Belongs to the EPSP synthase family. MurA subfamily.

It localises to the cytoplasm. It carries out the reaction phosphoenolpyruvate + UDP-N-acetyl-alpha-D-glucosamine = UDP-N-acetyl-3-O-(1-carboxyvinyl)-alpha-D-glucosamine + phosphate. It participates in cell wall biogenesis; peptidoglycan biosynthesis. In terms of biological role, cell wall formation. Adds enolpyruvyl to UDP-N-acetylglucosamine. This chain is UDP-N-acetylglucosamine 1-carboxyvinyltransferase, found in Shewanella woodyi (strain ATCC 51908 / MS32).